Reading from the N-terminus, the 214-residue chain is Single-pass membrane and coiled-coil domain-containing protein 1 (214 aa).

Positions 5–40 form a coiled coil; that stretch reads TTTLISLKEAMKRVDNKLRALDTQFKELDVTKDNLT. Residues 59–81 form a helical membrane-spanning segment; the sequence is IWTAALALGFTSMELNIVYSYVI. The segment at 193–214 is disordered; that stretch reads KQAQDPENSRAPLKELMPPVKD.

It localises to the membrane. This Mus musculus (Mouse) protein is Single-pass membrane and coiled-coil domain-containing protein 1 (Smco1).